A 1094-amino-acid chain; its full sequence is Isoleucine--tRNA ligase (1094 aa).

The short motif at 53 to 63 (PFANGLPHYGH) is the 'HIGH' region element. A 'KMSKS' region motif is present at residues 624–628 (KLSKR). Lys627 lines the ATP pocket.

This sequence belongs to the class-I aminoacyl-tRNA synthetase family. IleS type 2 subfamily. Monomer. Zn(2+) is required as a cofactor.

It localises to the cytoplasm. It carries out the reaction tRNA(Ile) + L-isoleucine + ATP = L-isoleucyl-tRNA(Ile) + AMP + diphosphate. Catalyzes the attachment of isoleucine to tRNA(Ile). As IleRS can inadvertently accommodate and process structurally similar amino acids such as valine, to avoid such errors it has two additional distinct tRNA(Ile)-dependent editing activities. One activity is designated as 'pretransfer' editing and involves the hydrolysis of activated Val-AMP. The other activity is designated 'posttransfer' editing and involves deacylation of mischarged Val-tRNA(Ile). This chain is Isoleucine--tRNA ligase, found in Rickettsia felis (strain ATCC VR-1525 / URRWXCal2) (Rickettsia azadi).